Here is a 540-residue protein sequence, read N- to C-terminus: Chaperonin GroEL 1 (540 aa).

Residues 29–32, 86–90, glycine 415, 479–481, and aspartate 495 each bind ATP; these read TIGP, DGTTT, and NAA.

Belongs to the chaperonin (HSP60) family. As to quaternary structure, forms a cylinder of 14 subunits composed of two heptameric rings stacked back-to-back. Interacts with the co-chaperonin GroES.

Its subcellular location is the cytoplasm. It carries out the reaction ATP + H2O + a folded polypeptide = ADP + phosphate + an unfolded polypeptide.. Functionally, together with its co-chaperonin GroES, plays an essential role in assisting protein folding. The GroEL-GroES system forms a nano-cage that allows encapsulation of the non-native substrate proteins and provides a physical environment optimized to promote and accelerate protein folding. The sequence is that of Chaperonin GroEL 1 from Streptomyces albus G.